Consider the following 80-residue polypeptide: UPF0248 protein MJ1316 (80 aa).

This sequence belongs to the UPF0248 family.

This chain is UPF0248 protein MJ1316, found in Methanocaldococcus jannaschii (strain ATCC 43067 / DSM 2661 / JAL-1 / JCM 10045 / NBRC 100440) (Methanococcus jannaschii).